The primary structure comprises 246 residues: Auxin-responsive protein IAA11 (246 aa).

The short motif at 36–40 is the EAR-like (transcriptional repression) element; it reads LGLTL. The region spanning 136 to 235 is the PB1 domain; sequence SMFVKVTMDG…SVRRLRIMKT (100 aa).

This sequence belongs to the Aux/IAA family. In terms of assembly, homodimers and heterodimers. Interacts with TPL. As to expression, preferentially expressed in stems and flowers.

Its subcellular location is the nucleus. Its function is as follows. Aux/IAA proteins are short-lived transcriptional factors that function as repressors of early auxin response genes at low auxin concentrations. Repression is thought to result from the interaction with auxin response factors (ARFs), proteins that bind to the auxin-responsive promoter element (AuxRE). Formation of heterodimers with ARF proteins may alter their ability to modulate early auxin response genes expression. This is Auxin-responsive protein IAA11 (IAA11) from Arabidopsis thaliana (Mouse-ear cress).